A 330-amino-acid polypeptide reads, in one-letter code: DNA-directed RNA polymerase subunit alpha (330 aa).

The alpha N-terminal domain (alpha-NTD) stretch occupies residues 1 to 235 (MQGSVTEFLK…EQLEAFVDLR (235 aa)). An alpha C-terminal domain (alpha-CTD) region spans residues 249-330 (FDPILLRPVD…WPPASIADNE (82 aa)).

This sequence belongs to the RNA polymerase alpha chain family. As to quaternary structure, homodimer. The RNAP catalytic core consists of 2 alpha, 1 beta, 1 beta' and 1 omega subunit. When a sigma factor is associated with the core the holoenzyme is formed, which can initiate transcription.

The enzyme catalyses RNA(n) + a ribonucleoside 5'-triphosphate = RNA(n+1) + diphosphate. In terms of biological role, DNA-dependent RNA polymerase catalyzes the transcription of DNA into RNA using the four ribonucleoside triphosphates as substrates. In Yersinia enterocolitica serotype O:8 / biotype 1B (strain NCTC 13174 / 8081), this protein is DNA-directed RNA polymerase subunit alpha.